Reading from the N-terminus, the 198-residue chain is NAD(P)H dehydrogenase (quinone) (198 aa).

In terms of domain architecture, Flavodoxin-like spans 4–189 (ILVLYYSMYG…SIARYQGEYV (186 aa)). FMN is bound by residues 10-15 (SMYGHI) and 78-80 (TRF). Y12 serves as a coordination point for NAD(+). W98 lines the substrate pocket. FMN-binding positions include 113–118 (STGTGG) and H133.

The protein belongs to the WrbA family. Requires FMN as cofactor.

It carries out the reaction a quinone + NADH + H(+) = a quinol + NAD(+). The enzyme catalyses a quinone + NADPH + H(+) = a quinol + NADP(+). The polypeptide is NAD(P)H dehydrogenase (quinone) (Salmonella paratyphi B (strain ATCC BAA-1250 / SPB7)).